Consider the following 176-residue polypeptide: MAKKRSKNEIDWTDEEEEIIWVSKSEIKRDSEHLKKLGAELIELTPQNLEKIPLDDDLKDAIRQAQSFKLEARRRQIQFIGKLLRNRDPEPIQEALDKVKNRHNQQQALLHKLELVRDQLVNMGDSSLEHLLTEHPQLDRQHLRNLIRGAQKEREANKPPKNYREIFQYLKTEIAE.

It belongs to the DarP family.

Its subcellular location is the cytoplasm. Its function is as follows. Member of a network of 50S ribosomal subunit biogenesis factors which assembles along the 30S-50S interface, preventing incorrect 23S rRNA structures from forming. Promotes peptidyl transferase center (PTC) maturation. The sequence is that of Dual-action ribosomal maturation protein DarP from Actinobacillus pleuropneumoniae serotype 5b (strain L20).